The sequence spans 339 residues: Glucokinase (339 aa).

Residue 16–21 coordinates ATP; sequence GDIGGT.

The protein belongs to the bacterial glucokinase family.

It is found in the cytoplasm. It catalyses the reaction D-glucose + ATP = D-glucose 6-phosphate + ADP + H(+). This is Glucokinase from Sinorhizobium fredii (strain NBRC 101917 / NGR234).